A 337-amino-acid polypeptide reads, in one-letter code: MVNFGLNSASILGIFLAVAGAGLYFLRSVRPEVSRDYDIFFSAVGLLCGLILLFQGWRLDPILQFGQLLLSGSTVFFAAETIRLRGITTEQARRSAPYADDRRVSKTRVYTEAELDQLEPEDEPVARNNRRLRGYDDDARSGRPDGYGEAEARPRPRSQGRNAPPTNPNPRPTRSRPSAGRSAPQRPGPAPGYNDNYGYEDDYSGWESGANDVWDDPTPSRRPPTRRPRPEAGNDPAPSRRPRPSNNPPNDSFGDRPERNAPRNARPYEDEPPAAYVDYQPIDEADLTPRPTTPEDPADRNQEQSRSGNPRSQRPSRSPVDGEEPPIGADDQERFDY.

The interval 111-337 is disordered; that stretch reads TEAELDQLEP…GADDQERFDY (227 aa). A compositionally biased stretch (acidic residues) spans 113 to 123; the sequence is AELDQLEPEDE. 2 stretches are compositionally biased toward basic and acidic residues: residues 133 to 143 and 253 to 269; these read RGYDDDARSGR and FGDR…RPYE. A compositionally biased stretch (polar residues) spans 304–316; sequence QSRSGNPRSQRPS.

The protein belongs to the ycf66 family.

The chain is Ycf66-like protein from Synechocystis sp. (strain ATCC 27184 / PCC 6803 / Kazusa).